A 427-amino-acid chain; its full sequence is 3-phosphoshikimate 1-carboxyvinyltransferase (427 aa).

3 residues coordinate 3-phosphoshikimate: lysine 23, serine 24, and arginine 28. Residue lysine 23 coordinates phosphoenolpyruvate. Glycine 97 and arginine 125 together coordinate phosphoenolpyruvate. Serine 170, serine 171, glutamine 172, serine 198, aspartate 314, asparagine 337, and lysine 341 together coordinate 3-phosphoshikimate. A phosphoenolpyruvate-binding site is contributed by glutamine 172. Residue aspartate 314 is the Proton acceptor of the active site. Residues arginine 345, arginine 387, and lysine 412 each coordinate phosphoenolpyruvate.

Belongs to the EPSP synthase family. In terms of assembly, monomer.

It is found in the cytoplasm. It catalyses the reaction 3-phosphoshikimate + phosphoenolpyruvate = 5-O-(1-carboxyvinyl)-3-phosphoshikimate + phosphate. Its pathway is metabolic intermediate biosynthesis; chorismate biosynthesis; chorismate from D-erythrose 4-phosphate and phosphoenolpyruvate: step 6/7. Functionally, catalyzes the transfer of the enolpyruvyl moiety of phosphoenolpyruvate (PEP) to the 5-hydroxyl of shikimate-3-phosphate (S3P) to produce enolpyruvyl shikimate-3-phosphate and inorganic phosphate. The sequence is that of 3-phosphoshikimate 1-carboxyvinyltransferase from Buchnera aphidicola subsp. Acyrthosiphon pisum (strain 5A).